Consider the following 329-residue polypeptide: Phenylalanine--tRNA ligase alpha subunit (329 aa).

This sequence belongs to the class-II aminoacyl-tRNA synthetase family. Phe-tRNA synthetase alpha subunit type 1 subfamily. As to quaternary structure, tetramer of two alpha and two beta subunits. It depends on Mg(2+) as a cofactor.

The protein resides in the cytoplasm. It catalyses the reaction tRNA(Phe) + L-phenylalanine + ATP = L-phenylalanyl-tRNA(Phe) + AMP + diphosphate + H(+). This chain is Phenylalanine--tRNA ligase alpha subunit (pheS), found in Buchnera aphidicola subsp. Acyrthosiphon pisum (strain APS) (Acyrthosiphon pisum symbiotic bacterium).